A 122-amino-acid chain; its full sequence is Ribosome-binding factor A (122 aa).

Belongs to the RbfA family. As to quaternary structure, monomer. Binds 30S ribosomal subunits, but not 50S ribosomal subunits or 70S ribosomes.

It localises to the cytoplasm. In terms of biological role, one of several proteins that assist in the late maturation steps of the functional core of the 30S ribosomal subunit. Associates with free 30S ribosomal subunits (but not with 30S subunits that are part of 70S ribosomes or polysomes). Required for efficient processing of 16S rRNA. May interact with the 5'-terminal helix region of 16S rRNA. The polypeptide is Ribosome-binding factor A (Pelagibacter ubique (strain HTCC1062)).